The following is a 652-amino-acid chain: DNA ligase (652 aa).

NAD(+) is bound by residues 29–33 (DSEYD), 78–79 (SL), and Glu-107. Catalysis depends on Lys-109, which acts as the N6-AMP-lysine intermediate. 4 residues coordinate NAD(+): Arg-130, Glu-164, Lys-278, and Lys-302. Zn(2+)-binding residues include Cys-395, Cys-398, Cys-413, and Cys-418. In terms of domain architecture, BRCT spans 577–652 (VADAALSGLT…VRDEAWLESL (76 aa)).

This sequence belongs to the NAD-dependent DNA ligase family. LigA subfamily. It depends on Mg(2+) as a cofactor. Requires Mn(2+) as cofactor.

The catalysed reaction is NAD(+) + (deoxyribonucleotide)n-3'-hydroxyl + 5'-phospho-(deoxyribonucleotide)m = (deoxyribonucleotide)n+m + AMP + beta-nicotinamide D-nucleotide.. In terms of biological role, DNA ligase that catalyzes the formation of phosphodiester linkages between 5'-phosphoryl and 3'-hydroxyl groups in double-stranded DNA using NAD as a coenzyme and as the energy source for the reaction. It is essential for DNA replication and repair of damaged DNA. The protein is DNA ligase of Streptococcus pneumoniae serotype 4 (strain ATCC BAA-334 / TIGR4).